The following is a 627-amino-acid chain: Threonine--tRNA ligase (627 aa).

The interval 221 to 523 (DHRKLGRELG…LIEHFAGDFP (303 aa)) is catalytic. Residues Cys-319, His-370, and His-500 each contribute to the Zn(2+) site.

Belongs to the class-II aminoacyl-tRNA synthetase family. In terms of assembly, homodimer. The cofactor is Zn(2+).

It is found in the cytoplasm. The catalysed reaction is tRNA(Thr) + L-threonine + ATP = L-threonyl-tRNA(Thr) + AMP + diphosphate + H(+). In terms of biological role, catalyzes the attachment of threonine to tRNA(Thr) in a two-step reaction: L-threonine is first activated by ATP to form Thr-AMP and then transferred to the acceptor end of tRNA(Thr). Also edits incorrectly charged L-seryl-tRNA(Thr). This is Threonine--tRNA ligase from Gloeobacter violaceus (strain ATCC 29082 / PCC 7421).